We begin with the raw amino-acid sequence, 367 residues long: Heme A synthase (367 aa).

5 helical membrane-spanning segments follow: residues 12 to 32 (GAVR…VAVG), 99 to 119 (LLGR…WWQG), 127 to 147 (LGLL…WIMV), 163 to 183 (LALH…LAAG), and 198 to 218 (ATAL…GLVA). Histidine 264 contacts heme. Transmembrane regions (helical) follow at residues 266–286 (VTAY…RLTG), 296–316 (GVVI…LLAV), and 317–337 (PLWA…MATV). A heme-binding site is contributed by histidine 324.

It belongs to the COX15/CtaA family. Type 2 subfamily. In terms of assembly, interacts with CtaB. Heme b serves as cofactor.

The protein resides in the cell membrane. It carries out the reaction Fe(II)-heme o + 2 A + H2O = Fe(II)-heme a + 2 AH2. The protein operates within porphyrin-containing compound metabolism; heme A biosynthesis; heme A from heme O: step 1/1. Its function is as follows. Catalyzes the conversion of heme O to heme A by two successive hydroxylations of the methyl group at C8. The first hydroxylation forms heme I, the second hydroxylation results in an unstable dihydroxymethyl group, which spontaneously dehydrates, resulting in the formyl group of heme A. The chain is Heme A synthase from Methylobacterium radiotolerans (strain ATCC 27329 / DSM 1819 / JCM 2831 / NBRC 15690 / NCIMB 10815 / 0-1).